A 266-amino-acid polypeptide reads, in one-letter code: Signal peptidase I (266 aa).

The Cytoplasmic portion of the chain corresponds to 1-20 (MQTDNTKSNTNKTAKQEWWS). The helical transmembrane segment at 21 to 41 (CAFVICIALLIRILIMEPFTV) threads the bilayer. Residues 42–266 (PTGSMKATIL…IFRNLYNTDE (225 aa)) are Periplasmic-facing. Catalysis depends on residues Ser-45 and Lys-108.

Belongs to the peptidase S26 family.

It localises to the cell inner membrane. The enzyme catalyses Cleavage of hydrophobic, N-terminal signal or leader sequences from secreted and periplasmic proteins.. The polypeptide is Signal peptidase I (lepB) (Rickettsia akari (strain Hartford)).